Reading from the N-terminus, the 268-residue chain is Phosphatidylglycerol--prolipoprotein diacylglyceryl transferase (268 aa).

Helical transmembrane passes span 14 to 34, 57 to 77, 90 to 110, and 117 to 137; these read LGPI…FAGW, LTFY…IIFY, FFLW…LIAF, and IGAN…IGLG. Arginine 140 provides a ligand contact to a 1,2-diacyl-sn-glycero-3-phospho-(1'-sn-glycerol). Helical transmembrane passes span 174 to 194, 200 to 220, and 240 to 260; these read QLFE…LVTI, YLVL…CEFF, and ILSI…FIKI.

This sequence belongs to the Lgt family.

It localises to the cell inner membrane. The catalysed reaction is L-cysteinyl-[prolipoprotein] + a 1,2-diacyl-sn-glycero-3-phospho-(1'-sn-glycerol) = an S-1,2-diacyl-sn-glyceryl-L-cysteinyl-[prolipoprotein] + sn-glycerol 1-phosphate + H(+). It participates in protein modification; lipoprotein biosynthesis (diacylglyceryl transfer). Its function is as follows. Catalyzes the transfer of the diacylglyceryl group from phosphatidylglycerol to the sulfhydryl group of the N-terminal cysteine of a prolipoprotein, the first step in the formation of mature lipoproteins. In Francisella tularensis subsp. tularensis (strain FSC 198), this protein is Phosphatidylglycerol--prolipoprotein diacylglyceryl transferase.